Here is a 56-residue protein sequence, read N- to C-terminus: uncharacterized protein (56 aa).

This is an uncharacterized protein from Acheta domesticus (House cricket).